Reading from the N-terminus, the 544-residue chain is Phosphoenolpyruvate carboxykinase (ATP) (544 aa).

246 to 253 (GLSGTGKT) is an ATP binding site.

Belongs to the phosphoenolpyruvate carboxykinase (ATP) family.

The enzyme catalyses oxaloacetate + ATP = phosphoenolpyruvate + ADP + CO2. Its pathway is carbohydrate biosynthesis; gluconeogenesis. The polypeptide is Phosphoenolpyruvate carboxykinase (ATP) (PCK1) (Candida glabrata (strain ATCC 2001 / BCRC 20586 / JCM 3761 / NBRC 0622 / NRRL Y-65 / CBS 138) (Yeast)).